Consider the following 145-residue polypeptide: Peptide methionine sulfoxide reductase MsrB (145 aa).

In terms of domain architecture, MsrB spans 4-127; the sequence is SDELKQRIGE…NSAALKFIPY (124 aa). C116 functions as the Nucleophile in the catalytic mechanism.

The protein belongs to the MsrB Met sulfoxide reductase family.

It catalyses the reaction L-methionyl-[protein] + [thioredoxin]-disulfide + H2O = L-methionyl-(R)-S-oxide-[protein] + [thioredoxin]-dithiol. This Streptococcus pyogenes serotype M3 (strain ATCC BAA-595 / MGAS315) protein is Peptide methionine sulfoxide reductase MsrB.